Consider the following 147-residue polypeptide: Hemoglobin subunit epsilon-1 (147 aa).

The 145-residue stretch at 3–147 (HFTAEEKAAI…VATALAHKYH (145 aa)) folds into the Globin domain. 2 residues coordinate heme b: H64 and H93.

This sequence belongs to the globin family. In terms of assembly, heterotetramer of two epsilon chains and two alpha chains. As to expression, red blood cells.

In terms of biological role, beta-type chain found in early embryos. This chain is Hemoglobin subunit epsilon-1 (HBE1), found in Capra hircus (Goat).